A 218-amino-acid polypeptide reads, in one-letter code: uncharacterized protein (218 aa).

The next 2 membrane-spanning stretches (helical) occupy residues 14-34 (CLLSIITILLYWYLRFVYFTS) and 175-195 (LIIPIPFGTIKIIVGSPLALV).

This sequence to H.pylori HP0270.

The protein localises to the cell membrane. This is an uncharacterized protein from Rickettsia prowazekii (strain Madrid E).